Reading from the N-terminus, the 156-residue chain is Small ribosomal subunit protein uS7 (156 aa).

Belongs to the universal ribosomal protein uS7 family. In terms of assembly, part of the 30S ribosomal subunit. Contacts proteins S9 and S11.

In terms of biological role, one of the primary rRNA binding proteins, it binds directly to 16S rRNA where it nucleates assembly of the head domain of the 30S subunit. Is located at the subunit interface close to the decoding center, probably blocks exit of the E-site tRNA. The sequence is that of Small ribosomal subunit protein uS7 from Dehalococcoides mccartyi (strain ATCC BAA-2100 / JCM 16839 / KCTC 5957 / BAV1).